Consider the following 380-residue polypeptide: MKILINKSELNKILKKMNNVIISNNKIKPHHSYFLIEAKEKEINFYANNEYFSVKCNLNKNIDILEQGSLIVKGKIFNDLINGIKEEIITIQEKDQTLLVKTKKTSINLNTINVNEFPRIRFNEKNDLSEFNQFKINYSLLVKGIKKIFHSVSNNREISSKFNGVNFNGSNGKEIFLEASDTYKLSVFEIKQETEPFDFILESNLLSFINSFNPEEDKSIVFYYRKDNKDSFSTEMLISMDNFMISYTSVNEKFPEVNYFFEFEPETKIVVQKNELKDALQRIQTLAQNERTFLCDMQINSSELKIRAIVNNIGNSLEEISCLKFEGYKLNISFNPSSLLDHIESFESNEINFDFQGNSKYFLITSKSEPELKQILVPSR.

This sequence belongs to the beta sliding clamp family. As to quaternary structure, forms a ring-shaped head-to-tail homodimer around DNA which binds and tethers DNA polymerases and other proteins to the DNA. The DNA replisome complex has a single clamp-loading complex (3 tau and 1 each of delta, delta', psi and chi subunits) which binds 3 Pol III cores (1 core on the leading strand and 2 on the lagging strand) each with a beta sliding clamp dimer. Additional proteins in the replisome are other copies of gamma, psi and chi, Ssb, DNA helicase and RNA primase.

The protein resides in the cytoplasm. Confers DNA tethering and processivity to DNA polymerases and other proteins. Acts as a clamp, forming a ring around DNA (a reaction catalyzed by the clamp-loading complex) which diffuses in an ATP-independent manner freely and bidirectionally along dsDNA. Initially characterized for its ability to contact the catalytic subunit of DNA polymerase III (Pol III), a complex, multichain enzyme responsible for most of the replicative synthesis in bacteria; Pol III exhibits 3'-5' exonuclease proofreading activity. The beta chain is required for initiation of replication as well as for processivity of DNA replication. This is Beta sliding clamp (dnaN) from Mycoplasma genitalium (strain ATCC 33530 / DSM 19775 / NCTC 10195 / G37) (Mycoplasmoides genitalium).